A 355-amino-acid polypeptide reads, in one-letter code: Anthranilate phosphoribosyltransferase (355 aa).

Residues glycine 102, 105 to 106, serine 110, 112 to 115, 130 to 138, and serine 142 contribute to the 5-phospho-alpha-D-ribose 1-diphosphate site; these read GD, NIST, and KHGNRSVSS. Glycine 102 is a binding site for anthranilate. Serine 114 contributes to the Mg(2+) binding site. Asparagine 133 serves as a coordination point for anthranilate. Arginine 188 provides a ligand contact to anthranilate. Mg(2+) is bound by residues aspartate 246 and glutamate 247.

This sequence belongs to the anthranilate phosphoribosyltransferase family. As to quaternary structure, homodimer. Mg(2+) serves as cofactor.

It catalyses the reaction N-(5-phospho-beta-D-ribosyl)anthranilate + diphosphate = 5-phospho-alpha-D-ribose 1-diphosphate + anthranilate. The protein operates within amino-acid biosynthesis; L-tryptophan biosynthesis; L-tryptophan from chorismate: step 2/5. In terms of biological role, catalyzes the transfer of the phosphoribosyl group of 5-phosphorylribose-1-pyrophosphate (PRPP) to anthranilate to yield N-(5'-phosphoribosyl)-anthranilate (PRA). In Pectobacterium atrosepticum (strain SCRI 1043 / ATCC BAA-672) (Erwinia carotovora subsp. atroseptica), this protein is Anthranilate phosphoribosyltransferase.